A 561-amino-acid chain; its full sequence is Liver carboxylesterase 1F (561 aa).

The N-terminal stretch at Met-1–Gly-18 is a signal peptide. A glycan (N-linked (GlcNAc...) asparagine) is linked at Asn-79. A disulfide bridge links Cys-87 with Cys-116. Ser-221 serves as the catalytic Acyl-ester intermediate. The cysteines at positions 273 and 284 are disulfide-linked. Residues Glu-353 and His-466 each act as charge relay system in the active site. The short motif at His-558–Leu-561 is the Prevents secretion from ER element.

This sequence belongs to the type-B carboxylesterase/lipase family. As to expression, expressed in liver and kidney.

It localises to the lipid droplet. It is found in the cytoplasm. The protein resides in the cytosol. Its subcellular location is the endoplasmic reticulum. The protein localises to the microsome. It carries out the reaction a carboxylic ester + H2O = an alcohol + a carboxylate + H(+). The enzyme catalyses all-trans-retinyl hexadecanoate + H2O = all-trans-retinol + hexadecanoate + H(+). Its function is as follows. Involved in the detoxification of xenobiotics and in the activation of ester and amide prodrugs. Hydrolyzes retinyl esters. Hydrolyzes p-nitrophenyl butyrate (PNPB), triacylglycerol and monoacylglycerol. Shows higher activity against PNPB, a short-chain fatty acid ester, than against triolein, a long-chain fatty acid ester. Shows no detectable activity against diacylglycerol, cholesterol ester or phospholipids. May play a role in adipocyte lipolysis. This Rattus norvegicus (Rat) protein is Liver carboxylesterase 1F.